The following is an 877-amino-acid chain: Probable alpha/beta-glucosidase agdC (877 aa).

An N-terminal signal peptide occupies residues 1 to 14 (MLGSLLLLAPLAGA). Residues asparagine 171, asparagine 293, and asparagine 373 are each glycosylated (N-linked (GlcNAc...) asparagine). Aspartate 422 serves as the catalytic Nucleophile. Glutamate 425 is a catalytic residue. The tract at residues 432-476 (DPCTDPERYSSENNLPPAPPPVRSSSPRPLPGFPADFQPSSASRS) is disordered. Residues 447–463 (PPAPPPVRSSSPRPLPG) are compositionally biased toward pro residues. Asparagine 508 is a glycosylation site (N-linked (GlcNAc...) asparagine). Aspartate 573 acts as the Proton donor in catalysis. 3 N-linked (GlcNAc...) asparagine glycosylation sites follow: asparagine 574, asparagine 610, and asparagine 744.

It belongs to the glycosyl hydrolase 31 family.

The protein resides in the secreted. It carries out the reaction Hydrolysis of terminal, non-reducing (1-&gt;4)-linked alpha-D-glucose residues with release of alpha-D-glucose.. It catalyses the reaction Hydrolysis of terminal, non-reducing beta-D-glucosyl residues with release of beta-D-glucose.. Functionally, glucosidase involved in the degradation of cellulosic biomass. Has both alpha- and beta-glucosidase activity. The chain is Probable alpha/beta-glucosidase agdC (agdC) from Aspergillus oryzae (strain ATCC 42149 / RIB 40) (Yellow koji mold).